A 492-amino-acid chain; its full sequence is Catalase-3 (492 aa).

Catalysis depends on residues histidine 65 and asparagine 138. Tyrosine 348 provides a ligand contact to heme.

It belongs to the catalase family. Homotetramer and heterotetramer. At least six or seven isozymes are produced from a mixture of 3 gene products. Interacts with NCA1. Interacts with LSD1. Heme serves as cofactor.

Its subcellular location is the peroxisome. It catalyses the reaction 2 H2O2 = O2 + 2 H2O. Occurs in almost all aerobically respiring organisms and serves to protect cells from the toxic effects of hydrogen peroxide. In Arabidopsis thaliana (Mouse-ear cress), this protein is Catalase-3 (CAT3).